The sequence spans 365 residues: Probable 7-methylxanthine methyltransferase PCS2 (365 aa).

Tyr19 lines the S-adenosyl-L-homocysteine pocket. Thr26 serves as a coordination point for theobromine. Residues Cys62, Asp99, Leu100, Ser134, and Phe135 each coordinate S-adenosyl-L-homocysteine. The theobromine site is built by Tyr152, His155, and Trp156. Asn173 is a binding site for Mg(2+). Arg221 provides a ligand contact to theobromine. Residues Asp259, Phe261, and Asn262 each contribute to the Mg(2+) site.

This sequence belongs to the methyltransferase superfamily. Type-7 methyltransferase family. Mg(2+) is required as a cofactor.

The enzyme catalyses 7-methylxanthine + S-adenosyl-L-methionine = theobromine + S-adenosyl-L-homocysteine + H(+). In terms of biological role, no detectable N-methyltransferase activity. The protein is Probable 7-methylxanthine methyltransferase PCS2 of Camellia ptilophylla (Cocoa tea).